A 347-amino-acid polypeptide reads, in one-letter code: Probable G-protein coupled receptor 148 (347 aa).

Residues Met-1 to Trp-51 are Extracellular-facing. N-linked (GlcNAc...) asparagine glycosylation occurs at Asn-34. A helical membrane pass occupies residues Leu-52–Val-72. The Cytoplasmic segment spans residues Thr-73 to His-85. Residues Tyr-86–Ile-106 traverse the membrane as a helical segment. The Extracellular portion of the chain corresponds to Ser-107–Ala-130. Residues Ala-131–Ile-151 form a helical membrane-spanning segment. Topologically, residues His-152–Ala-165 are cytoplasmic. The helical transmembrane segment at Trp-166–Leu-186 threads the bilayer. Topologically, residues Ser-187–Gly-214 are extracellular. Residues Leu-215–Ile-235 form a helical membrane-spanning segment. Residues Ala-236–Gly-261 lie on the Cytoplasmic side of the membrane. The helical transmembrane segment at Thr-262–Leu-282 threads the bilayer. The Extracellular portion of the chain corresponds to Asp-283–Trp-299. The helical transmembrane segment at Leu-300–Leu-322 threads the bilayer. Over Arg-323–Ser-347 the chain is Cytoplasmic.

The protein belongs to the G-protein coupled receptor 1 family. Expression restricted to nervous system and testis. Is also detected in several tumors types, most notably prostate cancer.

It localises to the cell membrane. In terms of biological role, orphan receptor. The polypeptide is Probable G-protein coupled receptor 148 (GPR148) (Homo sapiens (Human)).